A 69-amino-acid chain; its full sequence is DNA-directed RNA polymerase subunit omega (69 aa).

It belongs to the RNA polymerase subunit omega family. The RNAP catalytic core consists of 2 alpha, 1 beta, 1 beta' and 1 omega subunit. When a sigma factor is associated with the core the holoenzyme is formed, which can initiate transcription.

The enzyme catalyses RNA(n) + a ribonucleoside 5'-triphosphate = RNA(n+1) + diphosphate. Its function is as follows. Promotes RNA polymerase assembly. Latches the N- and C-terminal regions of the beta' subunit thereby facilitating its interaction with the beta and alpha subunits. This is DNA-directed RNA polymerase subunit omega from Geotalea uraniireducens (strain Rf4) (Geobacter uraniireducens).